The chain runs to 543 residues: Probable bifunctional tRNA threonylcarbamoyladenosine biosynthesis protein (543 aa).

The tract at residues 1-329 (MDISKDLICI…YRSDMVEVNW (329 aa)) is kae1. 3 residues coordinate Fe cation: histidine 112, histidine 116, and tyrosine 133. Residues 133–137 (YVSGG), aspartate 165, glycine 178, glutamate 182, and asparagine 262 each bind L-threonylcarbamoyladenylate. Residue aspartate 290 participates in Fe cation binding. The Protein kinase domain occupies 342–543 (IIPEHLIGKG…KEVEKRARYL (202 aa)). Residues 348–356 (IGKGAEADI) and lysine 369 each bind ATP. Aspartate 461 functions as the Proton acceptor; for kinase activity in the catalytic mechanism.

The protein in the N-terminal section; belongs to the KAE1 / TsaD family. It in the C-terminal section; belongs to the protein kinase superfamily. Tyr protein kinase family. BUD32 subfamily. In terms of assembly, component of the KEOPS complex that consists of Kae1, Bud32, Cgi121 and Pcc1; the whole complex dimerizes. The cofactor is Fe(2+).

Its subcellular location is the cytoplasm. It carries out the reaction L-seryl-[protein] + ATP = O-phospho-L-seryl-[protein] + ADP + H(+). The catalysed reaction is L-threonyl-[protein] + ATP = O-phospho-L-threonyl-[protein] + ADP + H(+). It catalyses the reaction L-threonylcarbamoyladenylate + adenosine(37) in tRNA = N(6)-L-threonylcarbamoyladenosine(37) in tRNA + AMP + H(+). Its function is as follows. Required for the formation of a threonylcarbamoyl group on adenosine at position 37 (t(6)A37) in tRNAs that read codons beginning with adenine. Is a component of the KEOPS complex that is probably involved in the transfer of the threonylcarbamoyl moiety of threonylcarbamoyl-AMP (TC-AMP) to the N6 group of A37. The Kae1 domain likely plays a direct catalytic role in this reaction. The Bud32 domain probably displays kinase activity that regulates Kae1 function. This Methanococcus maripaludis (strain C6 / ATCC BAA-1332) protein is Probable bifunctional tRNA threonylcarbamoyladenosine biosynthesis protein.